A 642-amino-acid polypeptide reads, in one-letter code: Threonine--tRNA ligase (642 aa).

Positions 1–61 (MPVITLPDGS…ENDAQLSIIT (61 aa)) constitute a TGS domain. The segment at 243 to 534 (DHRKIGKQLD…LTEEFAGFFP (292 aa)) is catalytic. Lysine 286 carries the N6-acetyllysine modification. Positions 334, 385, and 511 each coordinate Zn(2+).

The protein belongs to the class-II aminoacyl-tRNA synthetase family. In terms of assembly, homodimer. It depends on Zn(2+) as a cofactor.

It is found in the cytoplasm. It catalyses the reaction tRNA(Thr) + L-threonine + ATP = L-threonyl-tRNA(Thr) + AMP + diphosphate + H(+). Its function is as follows. Catalyzes the attachment of threonine to tRNA(Thr) in a two-step reaction: L-threonine is first activated by ATP to form Thr-AMP and then transferred to the acceptor end of tRNA(Thr). Also edits incorrectly charged L-seryl-tRNA(Thr). This Shigella flexneri serotype 5b (strain 8401) protein is Threonine--tRNA ligase.